Reading from the N-terminus, the 497-residue chain is uncharacterized protein (497 aa).

ABC transporter domains follow at residues 9 to 247 (VSVR…MGQA) and 256 to 496 (ARPA…TGMA). Position 41–48 (41–48 (GGNGAGKS)) interacts with ATP.

Belongs to the ABC transporter superfamily. Ribose importer (TC 3.A.1.2.1) family.

It localises to the cell membrane. Functionally, probably part of the binding-protein-dependent transport system y4mIJK. This system probably transports a sugar. Probably responsible for energy coupling to the transport system. This is an uncharacterized protein from Sinorhizobium fredii (strain NBRC 101917 / NGR234).